A 262-amino-acid polypeptide reads, in one-letter code: Acyl-[acyl-carrier-protein]--UDP-N-acetylglucosamine O-acyltransferase (262 aa).

Belongs to the transferase hexapeptide repeat family. LpxA subfamily. In terms of assembly, homotrimer.

It localises to the cytoplasm. It carries out the reaction a (3R)-hydroxyacyl-[ACP] + UDP-N-acetyl-alpha-D-glucosamine = a UDP-3-O-[(3R)-3-hydroxyacyl]-N-acetyl-alpha-D-glucosamine + holo-[ACP]. It participates in glycolipid biosynthesis; lipid IV(A) biosynthesis; lipid IV(A) from (3R)-3-hydroxytetradecanoyl-[acyl-carrier-protein] and UDP-N-acetyl-alpha-D-glucosamine: step 1/6. In terms of biological role, involved in the biosynthesis of lipid A, a phosphorylated glycolipid that anchors the lipopolysaccharide to the outer membrane of the cell. The polypeptide is Acyl-[acyl-carrier-protein]--UDP-N-acetylglucosamine O-acyltransferase (Burkholderia multivorans (strain ATCC 17616 / 249)).